Here is a 115-residue protein sequence, read N- to C-terminus: Large ribosomal subunit protein uL22 (115 aa).

Belongs to the universal ribosomal protein uL22 family. In terms of assembly, part of the 50S ribosomal subunit.

Its function is as follows. This protein binds specifically to 23S rRNA; its binding is stimulated by other ribosomal proteins, e.g. L4, L17, and L20. It is important during the early stages of 50S assembly. It makes multiple contacts with different domains of the 23S rRNA in the assembled 50S subunit and ribosome. The globular domain of the protein is located near the polypeptide exit tunnel on the outside of the subunit, while an extended beta-hairpin is found that lines the wall of the exit tunnel in the center of the 70S ribosome. The polypeptide is Large ribosomal subunit protein uL22 (Coxiella burnetii (strain CbuK_Q154) (Coxiella burnetii (strain Q154))).